Here is a 212-residue protein sequence, read N- to C-terminus: tRNA(Phe) 7-((3-amino-3-carboxypropyl)-4-demethylwyosine(37)-N(4))-methyltransferase 2 (212 aa).

Belongs to the TYW3 family.

The catalysed reaction is 4-demethyl-7-[(3S)-3-amino-3-carboxypropyl]wyosine(37) in tRNA(Phe) + S-adenosyl-L-methionine = 7-[(3S)-3-amino-3-carboxypropyl]wyosine(37) in tRNA(Phe) + S-adenosyl-L-homocysteine + H(+). Functionally, S-adenosyl-L-methionine-dependent methyltransferase that acts as a component of the wyosine derivatives biosynthesis pathway. Probably methylates N-4 position of wybutosine-86 to produce wybutosine-72. The chain is tRNA(Phe) 7-((3-amino-3-carboxypropyl)-4-demethylwyosine(37)-N(4))-methyltransferase 2 from Thermococcus kodakarensis (strain ATCC BAA-918 / JCM 12380 / KOD1) (Pyrococcus kodakaraensis (strain KOD1)).